The chain runs to 151 residues: Protein A151R (151 aa).

His102, Cys109, Cys132, and Cys135 together coordinate Zn(2+). The Thioredoxin WCTKC motif motif lies at Trp131–Cys135.

This sequence belongs to the asfivirus A151R family. Monomer. Homodimer. Interacts with protein B119L. Interacts with membrane protein E248R. The cofactor is Zn(2+).

May participate in a redox cascade for the formation of disulfide bonds in viral proteins. The chain is Protein A151R from African swine fever virus (strain Badajoz 1971 Vero-adapted) (Ba71V).